We begin with the raw amino-acid sequence, 435 residues long: Ribosomal protein uS12 methylthiotransferase RimO (435 aa).

One can recognise an MTTase N-terminal domain in the interval 2–118 (KKFHIVKLGC…IVEKIENGEY (117 aa)). [4Fe-4S] cluster-binding residues include Cys11, Cys47, Cys81, Cys150, Cys154, and Cys157. Positions 136–364 (IPDSHYAYVK…MTVQSEISKN (229 aa)) constitute a Radical SAM core domain. One can recognise a TRAM domain in the interval 367–435 (EKYIGETLEV…EYDLEGEIVE (69 aa)).

This sequence belongs to the methylthiotransferase family. RimO subfamily. It depends on [4Fe-4S] cluster as a cofactor.

The protein localises to the cytoplasm. The catalysed reaction is L-aspartate(89)-[ribosomal protein uS12]-hydrogen + (sulfur carrier)-SH + AH2 + 2 S-adenosyl-L-methionine = 3-methylsulfanyl-L-aspartate(89)-[ribosomal protein uS12]-hydrogen + (sulfur carrier)-H + 5'-deoxyadenosine + L-methionine + A + S-adenosyl-L-homocysteine + 2 H(+). Catalyzes the methylthiolation of an aspartic acid residue of ribosomal protein uS12. This chain is Ribosomal protein uS12 methylthiotransferase RimO, found in Petrotoga mobilis (strain DSM 10674 / SJ95).